The chain runs to 93 residues: uncharacterized protein (93 aa).

A signal peptide spans 1–22 (MNKYWLSGIIFLAYGLASPAFS).

This is an uncharacterized protein from Escherichia coli (strain K12).